We begin with the raw amino-acid sequence, 424 residues long: UPF0053 protein MG146 (424 aa).

Residues 6 to 191 enclose the CNNM transmembrane domain; it reads SGLTLTVIIL…EQNGLFSKED (186 aa). 4 helical membrane passes run 7–27, 71–91, 101–121, and 135–155; these read GLTLTVIILSIILLAFISTVV, LITILITNNIVAIMVSNILFL, LLSSVLNLVVSGVLIVSFCEI, and LVLFAYLVYFFYLIFWPITKL. CBS domains follow at residues 210–270 and 272–332; these read MIKW…PKSL and LNQL…IYDE.

It belongs to the UPF0053 family.

The protein localises to the cell membrane. This chain is UPF0053 protein MG146, found in Mycoplasma genitalium (strain ATCC 33530 / DSM 19775 / NCTC 10195 / G37) (Mycoplasmoides genitalium).